The chain runs to 489 residues: Squalene monooxygenase (489 aa).

Residues valine 10–leucine 30 traverse the membrane as a helical segment. Residues valine 21–isoleucine 22, glutamate 41–arginine 42, arginine 49, arginine 151, valine 167, aspartate 328, and methionine 341 each bind FAD. Transmembrane regions (helical) follow at residues phenylalanine 426–phenylalanine 446 and alanine 464–valine 484.

Belongs to the squalene monooxygenase family. FAD serves as cofactor.

It is found in the microsome membrane. It localises to the endoplasmic reticulum membrane. It catalyses the reaction squalene + reduced [NADPH--hemoprotein reductase] + O2 = (S)-2,3-epoxysqualene + oxidized [NADPH--hemoprotein reductase] + H2O + H(+). Its pathway is terpene metabolism; lanosterol biosynthesis; lanosterol from farnesyl diphosphate: step 2/3. Functionally, catalyzes the stereospecific oxidation of squalene to (S)-2,3-epoxysqualene, and is considered to be a rate-limiting enzyme in steroid biosynthesis. This chain is Squalene monooxygenase (ERG1), found in Candida glabrata (strain ATCC 2001 / BCRC 20586 / JCM 3761 / NBRC 0622 / NRRL Y-65 / CBS 138) (Yeast).